Consider the following 607-residue polypeptide: Fatty acid amide hydrolase (607 aa).

Residues Lys-205 and Ser-281 each act as charge relay system in the active site. 302–305 (GGGS) is a binding site for substrate. Ser-305 acts as the Acyl-ester intermediate in catalysis.

It belongs to the amidase family. Forms homodimers. In terms of tissue distribution, expressed in roots, leaves and flowers. Expressed in seedlings, flowers, roots, siliques, seeds and leaves.

It localises to the endoplasmic reticulum membrane. It is found in the cell membrane. The enzyme catalyses N-(5Z,8Z,11Z,14Z-eicosatetraenoyl)-ethanolamine + H2O = ethanolamine + (5Z,8Z,11Z,14Z)-eicosatetraenoate. It carries out the reaction N-(9Z,12Z-octadecadienoyl)-ethanolamine + H2O = ethanolamine + (9Z,12Z)-octadecadienoate. The catalysed reaction is N-hexadecanoylethanolamine + H2O = ethanolamine + hexadecanoate. It catalyses the reaction N-tetradecanoylethanolamine + H2O = tetradecanoate + ethanolamine. The enzyme catalyses N-dodecanoylethanolamine + H2O = dodecanoate + ethanolamine. Inhibited by methyl arachidonyl fluorophosphonate (MAFP). Its function is as follows. Catalyzes the hydrolysis of bioactive endogenous fatty acid amides to their corresponding acids. The hydrolysis of endogenous amidated lipids terminates their participation as lipid mediators in various signaling systems. Converts a wide range of N-acylethanolamines (NAEs) to their corresponding free fatty acids and ethanolamine. Can use oleamide as substrate, but not indole-3-acetamide, 1-naphtalene-acetamide, nicotinic acid amide or L-asparagine. Can use 2-arachidonylglycerol as substrate. Participates in the regulation of plant growth. Hydrolyzes N-dodecanoylethanolamine, which is has a growth inhibitory effect on seedling growth. Involved in plant defense signaling. Involved in abscisic acid (ABA) signaling through mechanisms that are independent of the catalytic activity. Involved in the regulation of flowering time. Catalyzes the hydrolysis of N-acyl L-homoserine lactones (AHLs), which are a class of signaling molecules produced by bacteria for quorum sensing. Accumulation of L-homoserine appears to encourage plant growth at low concentrations by stimulating transpiration, but higher concentrations inhibit growth by stimulating ethylene production. The protein is Fatty acid amide hydrolase of Arabidopsis thaliana (Mouse-ear cress).